Consider the following 187-residue polypeptide: Insulin-like growth factor 2 (187 aa).

Positions 1–23 (MCAARQILLLLLAFLAYALDSAA) are cleaved as a signal peptide. The segment at 25–51 (YGTAETLCGGELVDTLQFVCGDRGFYF) is b. 3 cysteine pairs are disulfide-bonded: cysteine 32-cysteine 71, cysteine 44-cysteine 84, and cysteine 70-cysteine 75. Residues 52 to 64 (SRPVGRNNRRINR) form a c region. An a region spans residues 64–85 (RGIVEECCFRSCDLALLETYCA). Residues 86 to 91 (KSVKSE) are d. Positions 92–187 (RDLSATSLAG…ASPEATGPQE (96 aa)) are cleaved as a propeptide — e peptide. Residues 162 to 187 (HRPLISLPSQRPPAPRASPEATGPQE) form a disordered region.

It belongs to the insulin family.

The protein localises to the secreted. Its function is as follows. The insulin-like growth factors, isolated from plasma, are structurally and functionally related to insulin but have a much higher growth-promoting activity. Acts as a ligand for integrin which is required for IGF2 signaling. The sequence is that of Insulin-like growth factor 2 from Gallus gallus (Chicken).